Reading from the N-terminus, the 186-residue chain is Ribonuclease M5 (186 aa).

The Toprim domain occupies 4-94; that stretch reads KEIIVVEGRD…AKPKNKRGIG (91 aa). Positions 10, 56, and 58 each coordinate Mg(2+).

The protein belongs to the ribonuclease M5 family. Requires ribosomal protein L18 (rplR) for catalysis; it can be replaced by 30% dimethylsulfoxide suggesting L18 functions as an rRNA folding chaperone. Mg(2+) serves as cofactor. Mn(2+) is required as a cofactor. Requires Ca(2+) as cofactor.

Its subcellular location is the cytoplasm. The catalysed reaction is Endonucleolytic cleavage of RNA, removing 21 and 42 nucleotides, respectively, from the 5'- and 3'-termini of a 5S-rRNA precursor.. In terms of biological role, required for correct processing of both the 5' and 3' ends of 5S rRNA precursor. Cleaves both sides of a double-stranded region yielding mature 5S rRNA in one step. Releases 5'-phosphoryl and 3'-hydroxy termini. This chain is Ribonuclease M5, found in Bacillus subtilis (strain 168).